The chain runs to 455 residues: Zinc finger and BTB domain-containing protein 8A.2 (455 aa).

The region spanning 24 to 92 (CDCHIMIDGH…MYSGKLNLSG (69 aa)) is the BTB domain. 2 C2H2-type zinc fingers span residues 299 to 321 (FKCP…LLCH) and 327 to 350 (YPCQ…RTIH).

The protein resides in the nucleus. Its function is as follows. May be involved in transcriptional regulation. The sequence is that of Zinc finger and BTB domain-containing protein 8A.2 (zbtb8a.2) from Xenopus tropicalis (Western clawed frog).